Here is a 313-residue protein sequence, read N- to C-terminus: 2,3-dihydroxyphenylpropionate/2,3-dihydroxicinnamic acid 1,2-dioxygenase (313 aa).

H115 functions as the Proton donor in the catalytic mechanism. The active-site Proton acceptor is the H179.

Belongs to the LigB/MhpB extradiol dioxygenase family. In terms of assembly, homotetramer. It depends on Fe(2+) as a cofactor.

The enzyme catalyses 3-(2,3-dihydroxyphenyl)propanoate + O2 = (2Z,4E)-2-hydroxy-6-oxonona-2,4-dienedioate + H(+). The catalysed reaction is (2E)-3-(2,3-dihydroxyphenyl)prop-2-enoate + O2 = (2Z,4E,7E)-2-hydroxy-6-oxonona-2,4,7-trienedioate + H(+). The protein operates within aromatic compound metabolism; 3-phenylpropanoate degradation. In terms of biological role, catalyzes the non-heme iron(II)-dependent oxidative cleavage of 2,3-dihydroxyphenylpropionic acid and 2,3-dihydroxicinnamic acid into 2-hydroxy-6-ketononadienedioate and 2-hydroxy-6-ketononatrienedioate, respectively. The protein is 2,3-dihydroxyphenylpropionate/2,3-dihydroxicinnamic acid 1,2-dioxygenase of Mycobacterium ulcerans (strain Agy99).